The sequence spans 518 residues: ORC1-type DNA replication protein 7 (518 aa).

ATP is bound at residue 94-98 (TGKTA). Positions 165-196 (DDDPNALEIGGSPGDDRTGNESSEGSDVSDSF) are disordered. Positions 186–196 (SSEGSDVSDSF) are enriched in low complexity. ATP is bound by residues Tyr318 and Arg330.

The protein belongs to the CDC6/cdc18 family.

Functionally, involved in regulation of DNA replication. Required to initiate DNA replication of the circular chromosome at a nearby autonomously replicating sequence (ARS) oriC1. The polypeptide is ORC1-type DNA replication protein 7 (orc7) (Halobacterium salinarum (strain ATCC 700922 / JCM 11081 / NRC-1) (Halobacterium halobium)).